Here is a 607-residue protein sequence, read N- to C-terminus: MGDVRTQLTPETPGRAAILNPFESPSDYCSLHEPFVSSPSVFKPSKSAATPQQFRWSIDQLAAINPIEIDAEDIHRQALYLSRAKTDKETEERRQKAIEEFFTKRTIVPSPWTQHEGKPAAPFHSTKCADLIHESPVGRVQAVQSGKSTVGCQTHLSLPVDFNLEKVLGEYFRAEETADQSQDNLSSSSLRRKLFLDGHASGSECSSPSSPPQEGPYYDPPAALGVLCSIDLSPVRCRSPTQTPSSGQFSSSPIQGGRRAFSLGSITSPTFLEKSPASVTSPSFSPIAINLGKTPDAEQKRLIFPSPETLSASTSMVNAFTRNPYIEGCSPIKSIFQIKSRSCRGNAPHRTSLFQIPFALEPHSDDKENSPPSSIKSPEGDLSSLFHQLENIVPDGHVMMGGEPIVSPTVYMQQEYLQSEELKENDTVEMVEPVEIEEEHSWPKETVATDNIPMASFMTGITFSGESSHMCMSPLAESSVIPCENSSIQVDSGYNTQTYGSCIMDGIGAETTYKENDTHISDIQNKCQHFKVKDISSVDCKNQLLEPESPEFQHSTQKSQNKLARYSLNSGMWKLTGDGAINRLNKNGGVQSPPRTLNPKSLSHFLQ.

Disordered stretches follow at residues 362–381 and 584–607; these read PHSD…PEGD and LNKN…HFLQ.

It belongs to the BORA family.

Functionally, required for the activation of aurka at the onset of mitosis. This Xenopus laevis (African clawed frog) protein is Protein aurora borealis (bora).